Consider the following 263-residue polypeptide: Ribonuclease HII (263 aa).

The RNase H type-2 domain maps to 71-262; the sequence is KAIAGIDEVG…VKSMCCDSTN (192 aa). A divalent metal cation contacts are provided by aspartate 77, glutamate 78, and aspartate 172.

It belongs to the RNase HII family. The cofactor is Mn(2+). It depends on Mg(2+) as a cofactor.

It localises to the cytoplasm. It carries out the reaction Endonucleolytic cleavage to 5'-phosphomonoester.. Endonuclease that specifically degrades the RNA of RNA-DNA hybrids. The chain is Ribonuclease HII from Streptococcus pyogenes serotype M1.